A 146-amino-acid chain; its full sequence is Anti-sigma F factor (146 aa).

Belongs to the anti-sigma-factor family.

The catalysed reaction is L-seryl-[protein] + ATP = O-phospho-L-seryl-[protein] + ADP + H(+). The enzyme catalyses L-threonyl-[protein] + ATP = O-phospho-L-threonyl-[protein] + ADP + H(+). Functionally, binds to sigma F and blocks its ability to form an RNA polymerase holoenzyme (E-sigma F). Phosphorylates SpoIIAA on a serine residue. This phosphorylation may enable SpoIIAA to act as an anti-anti-sigma factor that counteracts SpoIIAB and thus releases sigma F from inhibition. This is Anti-sigma F factor from Halalkalibacterium halodurans (strain ATCC BAA-125 / DSM 18197 / FERM 7344 / JCM 9153 / C-125) (Bacillus halodurans).